A 245-amino-acid polypeptide reads, in one-letter code: 8-amino-3,8-dideoxy-manno-octulosonate cytidylyltransferase (245 aa).

Belongs to the KdsB family.

Its subcellular location is the cytoplasm. The enzyme catalyses 8-amino-3,8-dideoxy-alpha-D-manno-octulosonate + CTP = CMP-8-amino-3,8-dideoxy-alpha-D-manno-oct-2-ulosonate + diphosphate. Its pathway is bacterial outer membrane biogenesis; lipopolysaccharide biosynthesis. Activates KDO8N (a required 8-carbon sugar) for incorporation into bacterial lipopolysaccharide in the Shewanella genus. The chain is 8-amino-3,8-dideoxy-manno-octulosonate cytidylyltransferase from Shewanella halifaxensis (strain HAW-EB4).